A 75-amino-acid chain; its full sequence is Small ribosomal subunit protein bS21A (75 aa).

It belongs to the bacterial ribosomal protein bS21 family.

The protein is Small ribosomal subunit protein bS21A (rpsU1) of Agrobacterium fabrum (strain C58 / ATCC 33970) (Agrobacterium tumefaciens (strain C58)).